Here is a 687-residue protein sequence, read N- to C-terminus: Protein Smaug homolog 2 (687 aa).

The segment covering 160-172 (TRPEPSYHSRQGS) has biased composition (basic and acidic residues). The disordered stretch occupies residues 160–301 (TRPEPSYHSR…NTFQEDGSGM (142 aa)). Position 172 is a phosphoserine (Ser172). Composition is skewed to low complexity over residues 175 to 190 (WGGP…GPGW) and 200 to 211 (HVPFHPSSSVPP). Positions 215–224 (SIGSNANTGL) are enriched in polar residues. Phosphoserine occurs at positions 271, 278, 279, and 281. The segment covering 278-290 (SSGSEQTEEQGSS) has biased composition (low complexity). The 74-residue stretch at 299-372 (SGMKDVPSWL…LKSLEKDVLE (74 aa)) folds into the SAM domain. A Phosphothreonine modification is found at Thr400. Positions 402 to 464 (TAKDEGRGEP…APAPVADGDI (63 aa)) are disordered. Residues 424 to 435 (GSDKGTEAKDPP) are compositionally biased toward basic and acidic residues. Over residues 448-461 (PSDSSEPAPAPVAD) the composition is skewed to low complexity. Phosphoserine occurs at positions 548, 550, 556, 585, and 593. Residue Arg595 is modified to Asymmetric dimethylarginine. The interval 600–636 (SPSLGGQGRQNLWFANPGGSNSMPSQSRSSVQRTHSL) is disordered. Positions 617-636 (GGSNSMPSQSRSSVQRTHSL) are enriched in polar residues. Ser621 carries the post-translational modification Phosphoserine.

It belongs to the SMAUG family.

Its subcellular location is the cytoplasm. It is found in the nucleus. Functionally, has transcriptional repressor activity. Overexpression inhibits the transcriptional activities of AP-1, p53/TP53 and CDKN1A. The sequence is that of Protein Smaug homolog 2 (Samd4b) from Mus musculus (Mouse).